Reading from the N-terminus, the 609-residue chain is Membrane protein insertase YidC (609 aa).

The chain crosses the membrane as a helical span at residues 9–29; sequence IIAIVLSGLILIAWQYFYNIP. A disordered region spans residues 35–63; the sequence is RAAQQAQSQTAKSPTEPTPNSPKPDHPAA. 4 helical membrane passes run 375-395, 449-469, 507-527, and 546-566; these read VFGN…AIFF, LPMV…FVTI, LLGP…TMWF, and WMPV…VIYW.

It belongs to the OXA1/ALB3/YidC family. Type 1 subfamily. As to quaternary structure, interacts with the Sec translocase complex via SecD. Specifically interacts with transmembrane segments of nascent integral membrane proteins during membrane integration.

The protein resides in the cell inner membrane. Functionally, required for the insertion and/or proper folding and/or complex formation of integral membrane proteins into the membrane. Involved in integration of membrane proteins that insert both dependently and independently of the Sec translocase complex, as well as at least some lipoproteins. Aids folding of multispanning membrane proteins. The polypeptide is Membrane protein insertase YidC (Nitrobacter hamburgensis (strain DSM 10229 / NCIMB 13809 / X14)).